We begin with the raw amino-acid sequence, 402 residues long: MKRFLKAWRKTSLIKKITIGVVIGLFLGILVPKASAIGLLGQLFVGGLKAIAPLLVFTLVISALSQHREGGKTNMSTIIGLYITATFAAALIAVVVNYIFPLTLILKTPAKTDLLPPKGISEVFQSLLLKIVDNPIHAITEANYMSILFWAVIFGLAMRSSNQRTKDLMQTFADATSQVVKWIINLAPIGIMGLVFTSISENGIGILGDYGLLILVLVGTMLFVALVVNPIIAFVMMRKNPYPLVLRCLKDSGITAFFTRSSAANIPVNMRLCEDLGLDKDTYSVSIPLGAAINMAGAAITINILTLAAVNTLGITVDFPTAFLLSVVAAVSACGASGVTGGSLLLIPVACSLFGISNDVAMQVVGVGFIVGVIQDSCETALNSSTDVLFTAVAEKSVFGKK.

9 consecutive transmembrane segments (helical) span residues 19–39, 43–63, 86–106, 138–158, 179–199, 212–232, 287–307, 327–347, and 354–374; these read IGVV…AIGL, LFVG…VISA, TFAA…TLIL, AITE…GLAM, VVKW…FTSI, LLIL…NPII, IPLG…ILTL, VVAA…LLLI, and FGIS…VGVI.

The protein belongs to the dicarboxylate/amino acid:cation symporter (DAACS) (TC 2.A.23) family.

The protein resides in the cell membrane. The catalysed reaction is L-serine(in) + Na(+)(in) = L-serine(out) + Na(+)(out). It catalyses the reaction L-threonine(in) + Na(+)(in) = L-threonine(out) + Na(+)(out). In terms of biological role, involved in the import of serine and threonine into the cell, with the concomitant import of sodium (symport system). In Streptococcus agalactiae serotype Ia (strain ATCC 27591 / A909 / CDC SS700), this protein is Serine/threonine transporter SstT.